A 38-amino-acid polypeptide reads, in one-letter code: Photosystem II reaction center protein L (38 aa).

The chain crosses the membrane as a helical span at residues 17-37; that stretch reads GLYWGLLLIFVLAVLFSSYFF.

Belongs to the PsbL family. In terms of assembly, PSII is composed of 1 copy each of membrane proteins PsbA, PsbB, PsbC, PsbD, PsbE, PsbF, PsbH, PsbI, PsbJ, PsbK, PsbL, PsbM, PsbT, PsbX, PsbY, PsbZ, Psb30/Ycf12, at least 3 peripheral proteins of the oxygen-evolving complex and a large number of cofactors. It forms dimeric complexes.

It localises to the plastid. Its subcellular location is the chloroplast thylakoid membrane. In terms of biological role, one of the components of the core complex of photosystem II (PSII). PSII is a light-driven water:plastoquinone oxidoreductase that uses light energy to abstract electrons from H(2)O, generating O(2) and a proton gradient subsequently used for ATP formation. It consists of a core antenna complex that captures photons, and an electron transfer chain that converts photonic excitation into a charge separation. This subunit is found at the monomer-monomer interface and is required for correct PSII assembly and/or dimerization. This chain is Photosystem II reaction center protein L, found in Staurastrum punctulatum (Green alga).